Here is a 167-residue protein sequence, read N- to C-terminus: Phosphopantetheine adenylyltransferase (167 aa).

Thr9 lines the substrate pocket. ATP is bound by residues 9-10 (TF) and His17. 3 residues coordinate substrate: Lys41, Leu73, and Arg87. ATP contacts are provided by residues 88–90 (GLR), Glu98, and 123–129 (YQFISGT).

It belongs to the bacterial CoaD family. In terms of assembly, homohexamer. Mg(2+) serves as cofactor.

It is found in the cytoplasm. It catalyses the reaction (R)-4'-phosphopantetheine + ATP + H(+) = 3'-dephospho-CoA + diphosphate. It functions in the pathway cofactor biosynthesis; coenzyme A biosynthesis; CoA from (R)-pantothenate: step 4/5. Its function is as follows. Reversibly transfers an adenylyl group from ATP to 4'-phosphopantetheine, yielding dephospho-CoA (dPCoA) and pyrophosphate. This is Phosphopantetheine adenylyltransferase from Bordetella avium (strain 197N).